A 494-amino-acid polypeptide reads, in one-letter code: UPF0371 protein SEQ_1471 (494 aa).

Belongs to the UPF0371 family.

The chain is UPF0371 protein SEQ_1471 from Streptococcus equi subsp. equi (strain 4047).